Consider the following 790-residue polypeptide: MRTLAGVEDEDKWLAEGIAGIQHNAFFMHRALDANNLREVLKYSALMLSELRTSKLSPQKYYDLYMRAFDQLRQLEIFFKDESRHGLPVVDLYELVQHAGNILPRMYLLCTVGSVYIKSKQAPSKDVLKDLVEMCRGVQHPIRGLFLRSYLAQVSRDKLPEIGSDYEGDANTVMDAVEFVLQNFTEMNKLWVRIQHQGPGTVREKQEKERNELRDLVGKNLHVLGQIEGVDLEMYKETVLPRVLEQVVNCKDKLAQYYLMECIIQVFPDEYHLQTLETLLAACTQLMPTVDTKIVLTQLMDRLSNYAASSPDVLHEFLQVEAFAKLSNAIGKVIDTQLEMPIVGAMTLFVSLLTFTLRVHPDRLDYVDQVLGACVVKLSSVPKLEDARAMKQVVALLSAPLEKYSDIVTALTLSNYPRVMDHLDDGTNKVMAMLIIQSIMKTDSCISTADKVEVLFELIKGLIKDLDETNAEELDEEDFQEEQNSVARLIHMLDNEEPEEMLKIICVVRRHLMTGGPRRLPFTVPPLVFSAVRLVRQLESQGGDIAGEDSATPRKIFQILNQTIEVLTSVPCPELALRLYLQCAEAASDCDLEPVAYEFFTQAFMLYEEEIADSKAQVTAIHLIVGTLQRINVFGVENRDTLTHKATGYSARLLKKPDQCRAVYACSHLFWVDDPDGIKDGERVLLCLRRALRIANAAQQMASATRGSSGPVTLFVEILNKYIYFFEKGNPHITPSDIQSLIELINNEMQSDNGNTTIHSDPFFTSTLRYIKFIKQKGGLMGEKYDPIKL.

The protein belongs to the VPS35 family. In terms of assembly, component of the retromer complex which consists of VPS29 (MAG1), VPS26 (VPS26A or VPS26B), VPS35 (VPS35A or VPS35B or VPS35C), VPS5/17 (SNX1 or SNX2A or SNX2B). Component of a retromer subcomplex consisting of VPS29 (MAG1), VPS26 (VPS26A or VPS26B), VPS35 (VPS35A or VPS35B or VPS35C). Expressed in siliques and maturing seeds (at protein level).

It localises to the cytoplasm. The protein localises to the endosome membrane. Its subcellular location is the prevacuolar compartment membrane. The protein resides in the golgi apparatus. It is found in the trans-Golgi network membrane. Functionally, plays a role in vesicular protein sorting. Component of the membrane-associated retromer complex which is essential in endosome-to-Golgi retrograde transport. Also involved in the efficient sorting of seed storage proteins globulin 12S and albumin 2S. The VPS29-VPS26-VPS35 subcomplex may be involved in recycling of specific cargos from endosome to the plasma membrane. This chain is Vacuolar protein sorting-associated protein 35B (VPS35B), found in Arabidopsis thaliana (Mouse-ear cress).